The chain runs to 274 residues: Nitrate import ATP-binding protein NrtD (274 aa).

In terms of domain architecture, ABC transporter spans 17–250 (LHFDCVGKTF…RPREREAVVE (234 aa)). Position 53-60 (53-60 (GHSGCGKS)) interacts with ATP.

Belongs to the ABC transporter superfamily. Nitrate/nitrite/cyanate uptake transporter (NitT) (TC 3.A.1.16) family. The complex is composed of two ATP-binding proteins (NrtC and NrtD), two transmembrane proteins (NrtB) and a solute-binding protein (NrtA).

The protein localises to the cell inner membrane. It carries out the reaction nitrate(out) + ATP + H2O = nitrate(in) + ADP + phosphate + H(+). In terms of biological role, part of the ABC transporter complex NrtABCD involved in nitrate uptake. The complex is probably also involved in nitrite transport. Probably responsible for energy coupling to the transport system. The sequence is that of Nitrate import ATP-binding protein NrtD from Synechococcus elongatus (strain ATCC 33912 / PCC 7942 / FACHB-805) (Anacystis nidulans R2).